We begin with the raw amino-acid sequence, 110 residues long: Phosphoribosyl-AMP cyclohydrolase (110 aa).

Position 80 (Asp80) interacts with Mg(2+). Cys81 lines the Zn(2+) pocket. Residues Asp82 and Asp84 each contribute to the Mg(2+) site. Residues Cys97 and Cys104 each coordinate Zn(2+).

This sequence belongs to the PRA-CH family. In terms of assembly, homodimer. Mg(2+) is required as a cofactor. Zn(2+) serves as cofactor.

The protein resides in the cytoplasm. It catalyses the reaction 1-(5-phospho-beta-D-ribosyl)-5'-AMP + H2O = 1-(5-phospho-beta-D-ribosyl)-5-[(5-phospho-beta-D-ribosylamino)methylideneamino]imidazole-4-carboxamide. It participates in amino-acid biosynthesis; L-histidine biosynthesis; L-histidine from 5-phospho-alpha-D-ribose 1-diphosphate: step 3/9. Its function is as follows. Catalyzes the hydrolysis of the adenine ring of phosphoribosyl-AMP. In Clostridium botulinum (strain Kyoto / Type A2), this protein is Phosphoribosyl-AMP cyclohydrolase.